Here is a 400-residue protein sequence, read N- to C-terminus: CinA-like protein (400 aa).

It belongs to the CinA family.

This chain is CinA-like protein, found in Escherichia coli (strain SE11).